Here is a 153-residue protein sequence, read N- to C-terminus: Ribonuclease K3 (153 aa).

An N-terminal signal peptide occupies residues 1–26 (MGPDLRCFPLLLLLLGLWWSVRPLCA). The N-linked (GlcNAc...) asparagine glycan is linked to N30. H41 functions as the Proton acceptor in the catalytic mechanism. Intrachain disulfides connect C49–C107, C63–C117, C81–C132, and C88–C95. N58 carries an N-linked (GlcNAc...) asparagine glycan. Residue 64-68 (KPQNT) coordinates substrate. N85 carries an N-linked (GlcNAc...) asparagine glycan. Residue K89 participates in substrate binding. H148 functions as the Proton donor in the catalytic mechanism.

It belongs to the pancreatic ribonuclease family. In terms of assembly, interacts (via N-terminus) with bacterial lipopolysaccharide (LPS). In terms of tissue distribution, kidney.

It localises to the secreted. The protein localises to the lysosome. Its subcellular location is the cytoplasmic granule. Functionally, ribonuclease which shows a preference for the pyrimidines uridine and cytosine. Has potent antibacterial activity against a range of Gram-positive and Gram-negative bacteria, including P.aeruginosa, A.baumanii, M.luteus, S.aureus, E.faecalis, E.faecium, S.saprophyticus and E.coli. Causes loss of bacterial membrane integrity, and also promotes agglutination of Gram-negative bacteria. Probably contributes to urinary tract sterility. Bactericidal activity is independent of RNase activity. This chain is Ribonuclease K3 (RNASE6), found in Sus scrofa (Pig).